The primary structure comprises 375 residues: Secreted LysM effector Vd4LysM (375 aa).

A signal peptide spans 1–24 (MPSVTISSTMLAGLLLMLVPASSA). Residues 57–104 (SWWWDNEGQIPCANMPAEWGITMQDFLRWNPSITSSCGNFLNGRSYCV) enclose the LysM 1 domain. The interval 108–139 (GEEPPVPGTPTTTTAPATTTKPSNGITTPQPI) is disordered. Residues 116–129 (TPTTTTAPATTTKP) are compositionally biased toward low complexity. The region spanning 149 to 195 (KFHYISEGDRCQDILSYQKITLADFFKWNPAVKSDCSGLWSKTNACV) is the LysM 2 domain. The segment covering 206–217 (TTTTKPATPTTP) has biased composition (low complexity). Residues 206-225 (TTTTKPATPTTPSNGITTPQ) form a disordered region. A LysM 3 domain is found at 237 to 283 (KFHYISEGDRCQDILSYQKITQADFFKWNPAVKSDCSGLWSKTHACV). Residues 287–317 (GGQAPPPTPTTTKPTTTKPPGNGVTTPTPTQ) are disordered. Positions 296–317 (TTTKPTTTKPPGNGVTTPTPTQ) are enriched in low complexity. The LysM 4 domain maps to 326–372 (KFHFVSPGNTCQQIVSYQKITMANFVKWNSGAGSGCNNLWGNTHACV).

The protein belongs to the secreted LysM effector family.

Its function is as follows. Might have a role in sequestration of chitin oligosaccharides (breakdown products of fungal cell walls that are released during invasion and act as triggers of host immunity) to dampen host defense. Does not play an important role during host colonization. This Verticillium dahliae (strain VdLs.17 / ATCC MYA-4575 / FGSC 10137) (Verticillium wilt) protein is Secreted LysM effector Vd4LysM.